The sequence spans 1529 residues: MAFAGVGQGLGTYDRTEQTSGASLGRVASRAHFTDTHPSDDLPAQTEEHRAREVGHLARQLTRQSVGGTDDSSALFSYQQGSDLDPFSDKFCARRWTKLMFEALQTSGPARKAGLSFRNLDVHGFGSDADYQKTVGNLPLVGIGALRDLISNRKRKVQILNSMDGVLEAGEMLVVLGPPGSGCTTMLKTIAGEMNGIYLDESSSLNYRGITPKQIYGQFRGEAIYTAEVDVHFPNLTVGQTLSFAAEARAPRNPPGGISKKEYAKHMRDVVMSVFGISHTLNTIVGNDFIRGVSGGERKRVTIAEASLAGAPLQCWDNSTRGLDSANAIEFCKNLRLNADYIGISSAVAIYQAPQAAYDCFDKVSVLYEGEQIFFGKTTDAKQFFVDMGFHCPSQQTVPDFLTSLTSASERTPREGFEGKVPTTPQEFAARWKQSDKYQELLAQIAEFENKYPVHGKNYQEFLQSRRAQQSKRLRAKSPYTLSYGGQVELCLRRGFDRLRADPSLTLTQLFGNFIMALIIGSVFYNLPATTSSFYSRGALLFFAILMSAFGSALEILILYAQRGIVEKHSRYAFYHPSAEAVASALTDIPYKVINCIIFSLTLYFMTNLRREPGPYFFFMLISFTLTMVMSMLFRSIASLSRSLAQALAPAALLILGLVMYTGFAVNVANMRGWARWMNWLDPIAYGFESLMINEFHDREYECSAFIPMGPGYEGATGQQHVCSTAGAIAGSSVVNGDDYINLSYEYYHAHKWRNFGILIGFFLFFTAIYMTATEFITAKKSKGEILVFPRGKIPRALLAQSTHSHGSSDDVEGGKFAGGSKMKKQITGADRADAGIIQRQTAIFSWKDVVYDIKIKKEPRRILDHVDGWVKPGTLTALMGVSGAGKTTLLDVLATRVTMGVVTGEMLVDGRQRDVSFQRKTGYVQQQDLHLETSTVREALRFSAVLRQSNTISIKEKYEYVEEVLKLLEMESYADAVVGVPGTGLNVEQRKRLTIGVELVAKPALLLFLDEPTSGLDSQTSWNILLLLRKLTEHGQAILCTIHQPSAMLFEQFDRLLFLARGGKTVYFGEVGKGSHILIDYFEKNGAPKCPEGENPAEWMLAAIGAAPGSHSDVDWHQAWINSPERVEVRRELARIKETQGGKGEAALQNKDHEKSKSEVKAEYAEFASPLWKQFNVVLTRVWQQHWRTPSYIWSKAALCALSALFIGFSFFKSGTSQQGLQNQLFSVFMMFTIFGQLTQQIMPNFTTQRSLYEVRERPSKTYSWKIFILSNIVAEIPWAILMGAVIYFTWYYPIGYYRNAIPTGAVHLRGALMFLYIEMFLIFNATFAIMIVAGIATAETAGNIANLLFSMCLIFCGVLAPPSSLPGFWMFMYRVSPFTYLVDGMLSTAVAETSVVCSDIELLTLNPPSGESCGDYMSTYISNYGGYLVNENATTACEFCSMSSTNSFLAQFNIYYSNKWRDFGLLWAYVVFNIIAAVGIYWLARVPKNTGKEQASEPEGVQEKLVPAQSSEKKRESVSRGSESTAA.

Positions 1–10 (MAFAGVGQGL) are enriched in gly residues. Residues 1–21 (MAFAGVGQGLGTYDRTEQTSG) are disordered. In terms of domain architecture, ABC transporter 1 spans 144–394 (GALRDLISNR…FVDMGFHCPS (251 aa)). N-linked (GlcNAc...) asparagine glycosylation is found at asparagine 235 and asparagine 318. 5 helical membrane-spanning segments follow: residues 505–525 (LTLT…SVFY), 539–559 (ALLF…ILIL), 589–609 (IPYK…MTNL), 614–634 (GPYF…SMLF), and 648–668 (LAPA…AVNV). An N-linked (GlcNAc...) asparagine glycan is attached at asparagine 742. Residues 757 to 777 (GILIGFFLFFTAIYMTATEFI) form a helical membrane-spanning segment. In terms of domain architecture, ABC transporter 2 spans 845 to 1087 (FSWKDVVYDI…ILIDYFEKNG (243 aa)). 881-888 (GVSGAGKT) contacts ATP. 5 helical membrane-spanning segments follow: residues 1193–1213 (YIWS…FSFF), 1227–1247 (FSVF…MPNF), 1268–1288 (IFIL…GAVI), 1314–1334 (LMFL…IMIV), and 1353–1373 (MCLI…FWMF). Asparagine 1434 carries an N-linked (GlcNAc...) asparagine glycan. The helical transmembrane segment at 1465–1485 (FGLLWAYVVFNIIAAVGIYWL) threads the bilayer. The disordered stretch occupies residues 1493 to 1529 (GKEQASEPEGVQEKLVPAQSSEKKRESVSRGSESTAA).

This sequence belongs to the ABC transporter superfamily. ABCG family. PDR (TC 3.A.1.205) subfamily.

It localises to the cell membrane. The catalysed reaction is itraconazole(in) + ATP + H2O = itraconazole(out) + ADP + phosphate + H(+). It carries out the reaction voriconazole(in) + ATP + H2O = voriconazole(out) + ADP + phosphate + H(+). It catalyses the reaction fluconazole(in) + ATP + H2O = fluconazole(out) + ADP + phosphate + H(+). In terms of biological role, pleiotropic ABC efflux transporter that confers resistance to structurally and functionally unrelated compounds including azoles such as fluconazole (FLC), itraconazole (ITC), posaconazole (POS), and voriconazole (VRC). The chain is ABC multidrug transporter AFR2 from Cryptococcus neoformans var. grubii serotype A (strain H99 / ATCC 208821 / CBS 10515 / FGSC 9487) (Filobasidiella neoformans var. grubii).